Here is a 386-residue protein sequence, read N- to C-terminus: Putative gustatory receptor 22b (386 aa).

The Cytoplasmic portion of the chain corresponds to 1 to 48 (MFGSSREIRPYLARQMLKTTLYGSWLLGIFPFTLDSGKRIRQLRRSRC). A helical membrane pass occupies residues 49–69 (LTLYGLVLNYFLIFTLIRLAF). Over 70–89 (EYRKHKLEAFKRNPVLEMIN) the chain is Extracellular. The chain crosses the membrane as a helical span at residues 90–110 (VVIGIINVLSALIVHFMNFWG). Over 111–155 (SRKVGEICNELLILEYQDFEGLNGRNCPNFNCFVIQKCLTILGQL) the chain is Cytoplasmic. Residues 156–176 (LSFFTLNFALPGLEFHICLVL) form a helical membrane-spanning segment. The Extracellular segment spans residues 177 to 178 (LS). Residues 179–199 (CLMEFSLNLNIMHYHVGVLLI) traverse the membrane as a helical segment. Topologically, residues 200–254 (YRYVWLINEQLKDLVSQLKLNPETDFSRIHQFLSLYKRLLELNRKLVIAYEYQMT) are cytoplasmic. The chain crosses the membrane as a helical span at residues 255–275 (LFIIAQLSGNIVVIYFLIVYG). The Extracellular portion of the chain corresponds to 276-282 (LSMRTYS). A helical membrane pass occupies residues 283 to 303 (IFLVAFPNSLLINIWDFWLCI). Residues 304 to 363 (AACDLTEKAGDETAIILKIFSDLEHRDDKLEMSVNEFAWLCSHRKFRFQLCGLFSMNCRM) are Cytoplasmic-facing. The helical transmembrane segment at 364–384 (GFKMIITTFLYLVYLVQFDYM) threads the bilayer. The Extracellular portion of the chain corresponds to 385 to 386 (NL).

Belongs to the insect chemoreceptor superfamily. Gustatory receptor (GR) family. Gr22e subfamily. Expressed in taste bristles in the foreleg and labial palps. In larvae, is expressed in neurons of the dorsal and posterior pharyngeal sense organs. Expressed in taste neurons that mediate sensitivity to bitter compounds.

The protein resides in the cell membrane. Its function is as follows. Probable gustatory receptor which mediates acceptance or avoidance behavior, depending on its substrates. Seems to be involved in the sensing of bitter taste since it is expressed in neurons that mediate sensitivity to bitter compounds. The chain is Putative gustatory receptor 22b from Drosophila melanogaster (Fruit fly).